The following is a 424-amino-acid chain: MLDIKRIRTDFEAVAEKLATRGVDAAVLNEMKKIDAKRRNILVKVETLKAERNTVSAEIAQAKRNKENTDDKIAAMQNLSAEVKALDAELAEIDAKLTEFTTTLPNIPADSVPVGADEDDNVEVRRWGTPREFDFEPKAHWDLGEDLGILDWERGGKVTGARFLFYKGLGARLERAIYNFMLDEHGKEGYTEVITPYIVNHDSMFGTGQYPKFKEDTFELSDTNFVLIPTAEVPLTNYYRDEILDGKDLPIYFTAMSPSFRSEAGSAGRDTRGLIRLHQFHKVEMVKFAKPEESYEELEKMTANAENILQKLNLPYRVVALSTGDMGFSAAKTYDLEVWIPAQNNYREISSCSNTEDFQARRAQIRYRDEADGKVKLLHTLNGSGLAVGRTVAAILENYQNEDGSVTIPEALRPYMGGAEVIKP.

Residue 230 to 232 (TAE) participates in L-serine binding. 261-263 (RSE) provides a ligand contact to ATP. Residue glutamate 284 participates in L-serine binding. 348–351 (EISS) is an ATP binding site. Residue serine 384 participates in L-serine binding.

It belongs to the class-II aminoacyl-tRNA synthetase family. Type-1 seryl-tRNA synthetase subfamily. As to quaternary structure, homodimer. The tRNA molecule binds across the dimer.

Its subcellular location is the cytoplasm. It catalyses the reaction tRNA(Ser) + L-serine + ATP = L-seryl-tRNA(Ser) + AMP + diphosphate + H(+). It carries out the reaction tRNA(Sec) + L-serine + ATP = L-seryl-tRNA(Sec) + AMP + diphosphate + H(+). It functions in the pathway aminoacyl-tRNA biosynthesis; selenocysteinyl-tRNA(Sec) biosynthesis; L-seryl-tRNA(Sec) from L-serine and tRNA(Sec): step 1/1. In terms of biological role, catalyzes the attachment of serine to tRNA(Ser). Is also able to aminoacylate tRNA(Sec) with serine, to form the misacylated tRNA L-seryl-tRNA(Sec), which will be further converted into selenocysteinyl-tRNA(Sec). This is Serine--tRNA ligase from Streptococcus pneumoniae (strain Hungary19A-6).